The primary structure comprises 468 residues: MAGFKVPSWITYKSFWIAVSSSVTTACVILGTLEFRKHRSIRRLQSMIVPEAGKSIQLSSSGVPIEIYDAGEEDEGISKGVPYDENLIREQLARNYAFFGEDGMERLRNSFVIVVGCGGVGSWVINMLARSGVQKIRIVDFDQVSLSSLNRHSIATLQDVGTPKTLAIKKAIKKFAPWIEVDARNALFNPDSADDLLSGNPDFVIDAIDNIQTKVDLLSYCYNHKLPVIASTGSACKSDPTRVNIADISATSEDPLSRATRRRLRLLGIMEGIPVVFSTEKPDPRKASLLPLSEEEFEKGDVDELSALPEFRARILPVIGPMPGIFGLTIATYVLTSIAKYPMDPISTMTRPRLYEEAVKRLHAEARKAGVNLDKTFNASEMSYIIEEVYVGRSALPPHESQKVTVVRWNPQLPFDHTNLVAMTRNEARYHEDNVLAKNVDPSTVYGKDVIEVVHSFLRRLRMWEMLY.

A run of 3 helical transmembrane segments spans residues 15 to 35 (FWIAVSSSVTTACVILGTLEF), 109 to 129 (NSFVIVVGCGGVGSWVINMLA), and 315 to 335 (ILPVIGPMPGIFGLTIATYVL).

Belongs to the HesA/MoeB/ThiF family.

Its subcellular location is the mitochondrion outer membrane. Catalyzes the ATP-dependent dehydration of threonylcarbamoyladenosine at position 37 (t(6)A37) to form cyclic t(6)A37 (ct(6)A37) in tRNAs that read codons beginning with adenine. The protein is tRNA threonylcarbamoyladenosine dehydratase (tcd1) of Schizosaccharomyces pombe (strain 972 / ATCC 24843) (Fission yeast).